We begin with the raw amino-acid sequence, 167 residues long: MEFKFNKDGSRDFLSKKKIAIIVGYFYQDICDNLLLASQETLTKYGIKANNINVFYAPGAFEIPLLAKKLASQQINGKNLYNGIVALGAVINGETPHFKFICNECARGVSNVSYQYEIPTTFGVITTNNMEQTIARAGGYKGNKGEEATMAMIIMLYLMQQADTQFF.

Residues Phe-26, 60–62 (AFE), and 89–91 (AVI) contribute to the 5-amino-6-(D-ribitylamino)uracil site. 94-95 (ET) lines the (2S)-2-hydroxy-3-oxobutyl phosphate pocket. His-97 serves as the catalytic Proton donor. Phe-122 lines the 5-amino-6-(D-ribitylamino)uracil pocket. Residue Arg-136 participates in (2S)-2-hydroxy-3-oxobutyl phosphate binding.

Belongs to the DMRL synthase family. In terms of assembly, forms an icosahedral capsid composed of 60 subunits, arranged as a dodecamer of pentamers.

The catalysed reaction is (2S)-2-hydroxy-3-oxobutyl phosphate + 5-amino-6-(D-ribitylamino)uracil = 6,7-dimethyl-8-(1-D-ribityl)lumazine + phosphate + 2 H2O + H(+). It functions in the pathway cofactor biosynthesis; riboflavin biosynthesis; riboflavin from 2-hydroxy-3-oxobutyl phosphate and 5-amino-6-(D-ribitylamino)uracil: step 1/2. Its function is as follows. Catalyzes the formation of 6,7-dimethyl-8-ribityllumazine by condensation of 5-amino-6-(D-ribitylamino)uracil with 3,4-dihydroxy-2-butanone 4-phosphate. This is the penultimate step in the biosynthesis of riboflavin. The polypeptide is 6,7-dimethyl-8-ribityllumazine synthase (Vesicomyosocius okutanii subsp. Calyptogena okutanii (strain HA)).